The primary structure comprises 462 residues: Flavin-containing monooxygenase FMO GS-OX3 (462 aa).

17–22 contributes to the FAD binding site; that stretch reads GAGPAG. NADP(+) is bound at residue 212-217; the sequence is GNFASG. The helical transmembrane segment at 318 to 338 threads the bilayer; it reads ALAPGLAFVGLPAMGIVFVMF.

This sequence belongs to the FMO family.

It localises to the membrane. The enzyme catalyses a (Z)-omega-(methylsulfanyl)-N-sulfo-alkylhydroximate S-glucoside + NADPH + O2 + H(+) = a (Z)-omega-(methylsulfinyl)-alkyl-glucosinolate + NADP(+) + H2O. Catalyzes the conversion of methylthioalkyl glucosinolates of any chain length into methylsulfinylalkyl glucosinolates. Prefers probably short-chain methylthioalkyl glucosinolates in cv. Landsberg erecta. This chain is Flavin-containing monooxygenase FMO GS-OX3 (FMOGS-OX3), found in Arabidopsis thaliana (Mouse-ear cress).